A 524-amino-acid chain; its full sequence is Putative UDP-glucuronosyltransferase ugt-56 (524 aa).

Positions 1 to 20 (MLWAFIVWLGALCIYGSAFD) are cleaved as a signal peptide. N-linked (GlcNAc...) asparagine glycans are attached at residues asparagine 125, asparagine 277, and asparagine 335. A helical membrane pass occupies residues 488-508 (LIDSSIALVFMLFIFVFVNHF).

Belongs to the UDP-glycosyltransferase family.

Its subcellular location is the membrane. It catalyses the reaction glucuronate acceptor + UDP-alpha-D-glucuronate = acceptor beta-D-glucuronoside + UDP + H(+). In Caenorhabditis elegans, this protein is Putative UDP-glucuronosyltransferase ugt-56 (ugt-56).